The following is a 639-amino-acid chain: Immunoglobulin-like domain-containing receptor 2 (639 aa).

The first 20 residues, 1–20, serve as a signal peptide directing secretion; the sequence is MDRVLLRWISLFWLTAMVEG. Residues 21-162 form the Ig-like V-type domain; sequence LQVTVPDKKK…LEGKNEDSVE (142 aa). Topologically, residues 21–186 are lumenal; it reads LQVTVPDKKK…PSFAVEIMPE (166 aa). An intrachain disulfide couples Cys-42 to Cys-145. The helical transmembrane segment at 187–207 threads the bilayer; it reads WVFVGLVLLGVFLFFVLVGIC. The Cytoplasmic portion of the chain corresponds to 208–639; it reads WCQCCPHSCC…DFPTRMSLVV (432 aa). Disordered regions lie at residues 273–295, 374–415, and 437–639; these read LMDK…HSVR, WSGV…MLSR, and YGQR…SLVV. 2 stretches are compositionally biased toward basic and acidic residues: residues 393 to 414 and 442 to 464; these read YNKE…EMLS and RRAD…ESRA. Residue Ser-473 is modified to Phosphoserine. Residues 483–493 are compositionally biased toward basic and acidic residues; sequence RSREPLTDADR. Arg-544 bears the Omega-N-methylarginine mark. A Phosphoserine modification is found at Ser-579. Residues 606–617 are compositionally biased toward basic and acidic residues; the sequence is RGRDLPYHSNSE.

It belongs to the immunoglobulin superfamily. LISCH7 family. Interacts with MARVELD2 and OCLN. Interacts with P4HB AND HSPA5; the interaction with HSPA5 stabilizes ILDR2 expression. Interacts (via C-terminus) with TRA2A, TRA2B and SRSF1. Expressed in testis, brain, pituitary, colon, heart, nerves, prostate, esophagus, lung liver and small intestine. Highly expressed in macrophages, also expressed in monocytes and at low levels in NK and NKT cells (at protein level).

The protein resides in the endoplasmic reticulum membrane. The protein localises to the cell junction. Its subcellular location is the tight junction. It is found in the nucleus. In terms of biological role, may be involved in ER stress pathways with effects on lipid homeostasis and insulin secretion. With ILDR1 and LSR, involved in the maintain of the epithelial barrier function through the recruitment of MARVELD2/tricellulin to tricellular tight junctions. Also functions as a B7-like protein family member expressed on immune cells and inflamed tissue and with T-cell inhibitory activity. In the inner ear, may regulate alternative pre-mRNA splicing via binding to TRA2A, TRA2B and SRSF1. This is Immunoglobulin-like domain-containing receptor 2 from Homo sapiens (Human).